A 188-amino-acid polypeptide reads, in one-letter code: GTP cyclohydrolase 1 (188 aa).

Zn(2+) contacts are provided by Cys78, His81, and Cys150.

This sequence belongs to the GTP cyclohydrolase I family. In terms of assembly, toroid-shaped homodecamer, composed of two pentamers of five dimers.

The catalysed reaction is GTP + H2O = 7,8-dihydroneopterin 3'-triphosphate + formate + H(+). It functions in the pathway cofactor biosynthesis; 7,8-dihydroneopterin triphosphate biosynthesis; 7,8-dihydroneopterin triphosphate from GTP: step 1/1. The polypeptide is GTP cyclohydrolase 1 (Geobacillus kaustophilus (strain HTA426)).